Here is a 679-residue protein sequence, read N- to C-terminus: Methionine--tRNA ligase (679 aa).

Zn(2+) is bound by residues C147, C150, C160, and C163. Residues 332 to 336 carry the 'KMSKS' region motif; the sequence is KISTS. T335 is a binding site for ATP. The region spanning 578–679 is the tRNA-binding domain; the sequence is DFMKLDIRVG…REVKPGSEVK (102 aa).

It belongs to the class-I aminoacyl-tRNA synthetase family. MetG type 1 subfamily. In terms of assembly, homodimer. Zn(2+) is required as a cofactor.

The protein localises to the cytoplasm. It catalyses the reaction tRNA(Met) + L-methionine + ATP = L-methionyl-tRNA(Met) + AMP + diphosphate. Its function is as follows. Is required not only for elongation of protein synthesis but also for the initiation of all mRNA translation through initiator tRNA(fMet) aminoacylation. In Bacteroides fragilis (strain YCH46), this protein is Methionine--tRNA ligase.